Here is a 260-residue protein sequence, read N- to C-terminus: Uroplakin-1b (260 aa).

Residues 1–15 are Cytoplasmic-facing; it reads MAKDNSTVRCFQGLL. Residues 16-36 traverse the membrane as a helical segment; the sequence is IFGNVIIGCCGIALTAECIFF. Residues 37–60 are Extracellular-facing; sequence VSDQHSLYPLLEATDNDDIYGAAW. Residues 61–81 form a helical membrane-spanning segment; that stretch reads IGIFVGICLFCLSVLGIVGIM. Topologically, residues 82–86 are cytoplasmic; sequence KSSRK. A helical membrane pass occupies residues 87–107; sequence ILLAYFILMFIVYAFEVASCI. At 108-229 the chain is on the extracellular side; the sequence is TAATQQDFFT…ELISGPMNRH (122 aa). Residues 230-250 form a helical membrane-spanning segment; the sequence is AWGVAWFGFAILCWTFWVLLG. Topologically, residues 251–260 are cytoplasmic; that stretch reads TMFYWSRIEY.

Belongs to the tetraspanin (TM4SF) family. In terms of assembly, heterodimer with uroplakin-3A (UPK3A) or uroplakin-3B (UPK3B). N-glycosylated with high-mannose oligosaccharides. As to expression, bladder epithelium.

The protein resides in the membrane. Component of the asymmetric unit membrane (AUM); a highly specialized biomembrane elaborated by terminally differentiated urothelial cells. May play an important role in normal bladder epithelial physiology, possibly in regulating membrane permeability of superficial umbrella cells or in stabilizing the apical membrane through AUM/cytoskeletal interactions. The polypeptide is Uroplakin-1b (UPK1B) (Homo sapiens (Human)).